The sequence spans 330 residues: Ketol-acid reductoisomerase (NADP(+)) (330 aa).

In terms of domain architecture, KARI N-terminal Rossmann spans 3 to 184 (LPVYYDKDID…GGGRMGVLET (182 aa)). NADP(+) is bound by residues 26–29 (YGAQ), Ser52, and Ser54. Residue His109 is part of the active site. Residue Gly135 coordinates NADP(+). A KARI C-terminal knotted domain is found at 185–329 (SFKEECESDL…EILRAPFNHK (145 aa)). The Mg(2+) site is built by Asp193, Glu197, Glu229, and Glu233. Ser254 is a binding site for substrate.

The protein belongs to the ketol-acid reductoisomerase family. Mg(2+) is required as a cofactor.

It carries out the reaction (2R)-2,3-dihydroxy-3-methylbutanoate + NADP(+) = (2S)-2-acetolactate + NADPH + H(+). The enzyme catalyses (2R,3R)-2,3-dihydroxy-3-methylpentanoate + NADP(+) = (S)-2-ethyl-2-hydroxy-3-oxobutanoate + NADPH + H(+). Its pathway is amino-acid biosynthesis; L-isoleucine biosynthesis; L-isoleucine from 2-oxobutanoate: step 2/4. The protein operates within amino-acid biosynthesis; L-valine biosynthesis; L-valine from pyruvate: step 2/4. Involved in the biosynthesis of branched-chain amino acids (BCAA). Catalyzes an alkyl-migration followed by a ketol-acid reduction of (S)-2-acetolactate (S2AL) to yield (R)-2,3-dihydroxy-isovalerate. In the isomerase reaction, S2AL is rearranged via a Mg-dependent methyl migration to produce 3-hydroxy-3-methyl-2-ketobutyrate (HMKB). In the reductase reaction, this 2-ketoacid undergoes a metal-dependent reduction by NADPH to yield (R)-2,3-dihydroxy-isovalerate. This chain is Ketol-acid reductoisomerase (NADP(+)), found in Helicobacter pylori (strain ATCC 700392 / 26695) (Campylobacter pylori).